Consider the following 165-residue polypeptide: 16S rRNA aminocarboxypropyltransferase (165 aa).

The S-adenosyl-L-methionine site is built by threonine 17, leucine 62, leucine 83, and threonine 102.

This sequence belongs to the TDD superfamily. TSR3 family.

Its subcellular location is the cytoplasm. It carries out the reaction an N(1)-methylpseudouridine in rRNA + S-adenosyl-L-methionine = N(1)-methyl-N(3)-[(3S)-3-amino-3-carboxypropyl]pseudouridine in rRNA + S-methyl-5'-thioadenosine + H(+). In terms of biological role, aminocarboxypropyltransferase that catalyzes the aminocarboxypropyl transfer on pseudouridine corresponding to position 914 in M.jannaschii 16S rRNA. It constitutes the last step in biosynthesis of the hypermodified N1-methyl-N3-(3-amino-3-carboxypropyl) pseudouridine (m1acp3-Psi). In Halobacterium salinarum (strain ATCC 700922 / JCM 11081 / NRC-1) (Halobacterium halobium), this protein is 16S rRNA aminocarboxypropyltransferase.